We begin with the raw amino-acid sequence, 493 residues long: Tripartite motif-containing protein 5 (493 aa).

Position 2 is an N-acetylalanine (A2). The segment at 15–59 adopts an RING-type zinc-finger fold; that stretch reads CPICLELLTQPLSLDCGHSFCQACLTANHKKSTLDKGERSCPVCR. Position 86 is a phosphoserine (S86). A B box-type zinc finger spans residues 90–132; it reads QKVDHCARHGEKLLLFCKEDGKVICWLCERSQEHRGHHTFLTE. Zn(2+)-binding residues include C95, H98, C117, and H123. Positions 131 to 223 form a coiled coil; the sequence is TEEVAQKYQV…LTKSETEMVQ (93 aa). The required for interaction with GABARAP and for autophagy stretch occupies residues 185-198; it reads FEQLRDILDWEESN. Residues 281–493 form the B30.2/SPRY domain; that stretch reads LKGMLEVFRE…VPMTLCSPSS (213 aa).

This sequence belongs to the TRIM/RBCC family. Can form homodimers and homotrimers. In addition to lower-order dimerization, also exhibits a higher-order multimerization and both low- and high-order multimerizations are essential for its restriction activity. Interacts with BTBD1 and BTBD2. Interacts with PSMC4, PSMC5, PSMD7 and HSPA8/HSC70. Interacts (via B30.2/SPRY domain) with HSPA1A/B. Interacts with PSMC2, MAP3K7/TAK1, TAB2 and TAB3. Interacts with SQSTM1. Interacts with TRIM6 and TRIM34. Interacts with ULK1 (phosphorylated form), GABARAP, GABARAPL1, GABARAPL2, MAP1LC3A, MAP1LC3C and BECN1. Post-translationally, degraded in a proteasome-independent fashion in the absence of viral infection but in a proteasome-dependent fashion following exposure to restriction sensitive virus. In terms of processing, autoubiquitinated in a RING finger- and UBE2D2-dependent manner. Monoubiquitinated by TRIM21. Deubiquitinated by Yersinia YopJ. Ubiquitination may not lead to proteasomal degradation.

It is found in the cytoplasm. It localises to the nucleus. The enzyme catalyses S-ubiquitinyl-[E2 ubiquitin-conjugating enzyme]-L-cysteine + [acceptor protein]-L-lysine = [E2 ubiquitin-conjugating enzyme]-L-cysteine + N(6)-ubiquitinyl-[acceptor protein]-L-lysine.. It functions in the pathway protein modification; protein ubiquitination. Capsid-specific restriction factor that prevents infection from non-host-adapted retroviruses. Blocks viral replication early in the life cycle, after viral entry but before reverse transcription. In addition to acting as a capsid-specific restriction factor, also acts as a pattern recognition receptor that activates innate immune signaling in response to the retroviral capsid lattice. Binding to the viral capsid triggers its E3 ubiquitin ligase activity, and in concert with the heterodimeric ubiquitin conjugating enzyme complex UBE2V1-UBE2N (also known as UBC13-UEV1A complex) generates 'Lys-63'-linked polyubiquitin chains, which in turn are catalysts in the autophosphorylation of the MAP3K7/TAK1 complex (includes TAK1, TAB2, and TAB3). Activation of the MAP3K7/TAK1 complex by autophosphorylation results in the induction and expression of NF-kappa-B and MAPK-responsive inflammatory genes, thereby leading to an innate immune response in the infected cell. Plays a role in regulating autophagy through activation of autophagy regulator BECN1 by causing its dissociation from its inhibitors BCL2 and TAB2. This Pongo pygmaeus (Bornean orangutan) protein is Tripartite motif-containing protein 5 (TRIM5).